The chain runs to 104 residues: Large ribosomal subunit protein uL24 (104 aa).

It belongs to the universal ribosomal protein uL24 family. Part of the 50S ribosomal subunit.

One of two assembly initiator proteins, it binds directly to the 5'-end of the 23S rRNA, where it nucleates assembly of the 50S subunit. In terms of biological role, one of the proteins that surrounds the polypeptide exit tunnel on the outside of the subunit. The polypeptide is Large ribosomal subunit protein uL24 (Buchnera aphidicola subsp. Acyrthosiphon pisum (strain 5A)).